The primary structure comprises 208 residues: Uracil phosphoribosyltransferase (208 aa).

Residues arginine 78, arginine 103, and 130-138 (DPMLATGGS) each bind 5-phospho-alpha-D-ribose 1-diphosphate. Uracil is bound by residues isoleucine 193 and 198–200 (GDA). Position 199 (aspartate 199) interacts with 5-phospho-alpha-D-ribose 1-diphosphate.

This sequence belongs to the UPRTase family. The cofactor is Mg(2+).

The enzyme catalyses UMP + diphosphate = 5-phospho-alpha-D-ribose 1-diphosphate + uracil. It participates in pyrimidine metabolism; UMP biosynthesis via salvage pathway; UMP from uracil: step 1/1. With respect to regulation, allosterically activated by GTP. Functionally, catalyzes the conversion of uracil and 5-phospho-alpha-D-ribose 1-diphosphate (PRPP) to UMP and diphosphate. The protein is Uracil phosphoribosyltransferase of Yersinia pestis.